The following is a 1712-amino-acid chain: Probable ATP-dependent RNA helicase DDX60 (1712 aa).

The 168-residue stretch at 772–939 (LDVVDKNESA…WLQSVKWYWK (168 aa)) folds into the Helicase ATP-binding domain. Position 785–792 (785–792 (APTSSGKT)) interacts with ATP. Positions 889 to 892 (DEVH) match the DEVH box motif. A Helicase C-terminal domain is found at 1226-1370 (YADQKAVDTE…HFPLSITLVL (145 aa)).

Belongs to the helicase family. Interacts with EXOSC1, EXOSC4, RIGI, IFIH1/MDA5 and DHX58/LGP2. As to expression, brain, lymph node, prostate, stomach, thyroid, tongue, trachea, uterus, skeletal muscle, spleen, kidney, liver and small intestine.

The protein localises to the cytoplasm. It catalyses the reaction ATP + H2O = ADP + phosphate + H(+). Its function is as follows. Positively regulates RIGI- and IFIH1/MDA5-dependent type I interferon and interferon inducible gene expression in response to viral infection. Binds ssRNA, dsRNA and dsDNA and can promote the binding of RIGI to dsRNA. Exhibits antiviral activity against hepatitis C virus and vesicular stomatitis virus (VSV). The protein is Probable ATP-dependent RNA helicase DDX60 (DDX60) of Homo sapiens (Human).